The sequence spans 241 residues: DNA repair protein RecO (241 aa).

The protein belongs to the RecO family.

Involved in DNA repair and RecF pathway recombination. The polypeptide is DNA repair protein RecO (Yersinia enterocolitica serotype O:8 / biotype 1B (strain NCTC 13174 / 8081)).